Reading from the N-terminus, the 147-residue chain is uncharacterized protein (147 aa).

Residues Pro-29–His-147 are disordered. 2 stretches are compositionally biased toward polar residues: residues Ser-34–Asn-45 and Pro-60–Ser-73. The span at Pro-75–Asn-92 shows a compositional bias: gly residues. Over residues Asp-122–His-147 the composition is skewed to basic residues.

This is an uncharacterized protein from Caenorhabditis elegans.